The primary structure comprises 179 residues: UPF0227 protein Ssed_2836 (179 aa).

Belongs to the UPF0227 family.

The polypeptide is UPF0227 protein Ssed_2836 (Shewanella sediminis (strain HAW-EB3)).